The following is a 438-amino-acid chain: Protein maelstrom 2 (438 aa).

A DNA-binding region (HMG box) is located at residues 2–69 (APKKRNGFMT…LERTAKKERL (68 aa)). The tract at residues 374–438 (KEMGSRDLSP…NMGAGKKIAR (65 aa)) is disordered. The segment covering 381–391 (LSPSSSHQSVS) has biased composition (polar residues).

Belongs to the maelstrom family.

It localises to the cytoplasm. The protein resides in the nucleus. Involved both in the piRNA and miRNA metabolic processes. As a component of the meiotic nuage, plays a central role during oogenesis by repressing transposable elements and preventing their mobilization, which is essential for the germline integrity. Repression of transposable elements is mediated via the piRNA metabolic process, which mediates the repression of transposable elements during meiosis by forming complexes composed of piRNAs and Piwi proteins and governs the repression of transposons. As a nuclear component, it is required for proper differentiation in the germline stem cell (GSC) lineage by repressing microRNA-7 (miR-7), thereby acting as an indirect regulator of bag-of-marbles (Bam). Acts by binding to the promoter of miR-7 gene and repressing its expression; miR-7 repression alleviates the Bam repression by miR-7, thereby allowing differentiation in the germline stem cell (GSC) lineage. The chain is Protein maelstrom 2 (mael2) from Drosophila persimilis (Fruit fly).